We begin with the raw amino-acid sequence, 306 residues long: Agmatinase (306 aa).

Positions 126, 149, 151, 153, 230, and 232 each coordinate Mn(2+).

It belongs to the arginase family. Agmatinase subfamily. It depends on Mn(2+) as a cofactor.

It catalyses the reaction agmatine + H2O = urea + putrescine. It functions in the pathway amine and polyamine biosynthesis; putrescine biosynthesis via agmatine pathway; putrescine from agmatine: step 1/1. Functionally, catalyzes the formation of putrescine from agmatine. This is Agmatinase from Citrobacter koseri (strain ATCC BAA-895 / CDC 4225-83 / SGSC4696).